Reading from the N-terminus, the 141-residue chain is Galactose-6-phosphate isomerase subunit LacA (141 aa).

Belongs to the LacAB/RpiB family. In terms of assembly, heteromultimeric protein consisting of LacA and LacB.

It carries out the reaction aldehydo-D-galactose 6-phosphate = keto-D-tagatose 6-phosphate. It participates in carbohydrate metabolism; D-galactose 6-phosphate degradation; D-tagatose 6-phosphate from D-galactose 6-phosphate: step 1/1. The protein is Galactose-6-phosphate isomerase subunit LacA of Streptococcus pneumoniae (strain 70585).